The sequence spans 463 residues: Nuclear hormone receptor family member nhr-3 (463 aa).

A DNA-binding region (nuclear receptor) is located at residues 50-125 (STICSVCCDE…VGMEPDAIRP (76 aa)). NR C4-type zinc fingers lie at residues 53 to 73 (CSVCCDEASGRHYGVVACFGC) and 89 to 113 (CRYSKKCRIDKAGRNVCRSCRFQKC). Positions 121 to 131 (DAIRPDRDKTG) are enriched in basic and acidic residues. The interval 121–143 (DAIRPDRDKTGRQKNPRRNTEGS) is disordered. The NR LBD domain maps to 199-462 (EIENIVIQLQ…VLEELLFLDR (264 aa)).

Belongs to the nuclear hormone receptor family.

Its subcellular location is the nucleus. Its function is as follows. Orphan nuclear receptor. This chain is Nuclear hormone receptor family member nhr-3 (nhr-3), found in Caenorhabditis elegans.